The chain runs to 154 residues: Endoribonuclease YbeY (154 aa).

Zn(2+) is bound by residues histidine 117, histidine 121, and histidine 127.

Belongs to the endoribonuclease YbeY family. Requires Zn(2+) as cofactor.

The protein resides in the cytoplasm. Functionally, single strand-specific metallo-endoribonuclease involved in late-stage 70S ribosome quality control and in maturation of the 3' terminus of the 16S rRNA. The sequence is that of Endoribonuclease YbeY from Mycoplasma pneumoniae (strain ATCC 29342 / M129 / Subtype 1) (Mycoplasmoides pneumoniae).